The primary structure comprises 494 residues: MFS-type transporter lnaF (494 aa).

The segment at 1-51 is disordered; the sequence is MTYDPENAMGEARADAPVEAEKEHEATQTTVKESTLGYDNSSDPSRRDSYR. Residues 12–26 are compositionally biased toward basic and acidic residues; sequence ARADAPVEAEKEHEA. N-linked (GlcNAc...) asparagine glycosylation is found at Asn-40, Asn-58, and Asn-68. 10 helical membrane passes run 105–125, 128–148, 156–176, 203–223, 228–248, 290–310, 323–343, 354–374, 383–403, and 446–466; these read SLLIGAILGVLALGYTSDMFS, AGLLFTSGLVAIGTLMSTLAL, MLWYFVIVRGIAGFGVGGEYP, TLMATSAAPIQMIVYLICLIA, LPVTFHAIYSIATILPVIIMV, LAFFLYDFINFPNSIMSSTII, AIWQVILGALPVPGVIVGAWL, ILGFAGYMVLGFVIGGTFPHL, VLYGLLQALGHMGPGATIGLI, and STFYLAGGIAILGMIVYWFLP.

This sequence belongs to the major facilitator superfamily. Sugar transporter (TC 2.A.1.1) family.

Its subcellular location is the cell membrane. MFS-type transporter; part of the lna gene cluster that mediates the biosynthesis of diastereomeric piperazines. Lna and lnb clusters encode sets of enzymes that produce overlapping sets of previously undescribed metabolites such as piperazinomycin-like metabolites or morpholine. The lna and lnb biosynthetic pathways appear to be part of a signaling network that controls the formation of sclerotia, a resilient overwintering structure. May be involved in the secretion of the metabolites produced by the lna and lnb clusters. This chain is MFS-type transporter lnaF, found in Aspergillus flavus (strain ATCC 200026 / FGSC A1120 / IAM 13836 / NRRL 3357 / JCM 12722 / SRRC 167).